Reading from the N-terminus, the 595-residue chain is Indole-3-acetic acid-amido synthetase GH3.15 (595 aa).

Residues 97–98, Thr302, and 325–330 contribute to the ATP site; these read SS and FYGSSE. The substrate site is built by Phe325 and Phe332. Residues Tyr348 and Asp408 each coordinate ATP.

It belongs to the IAA-amido conjugating enzyme family. As to expression, expressed in seedlings, roots, and parts of the siliques.

It catalyses the reaction (indol-3-yl)butanoate + L-cysteine + ATP = (indol-3-yl)butanoyl-L-cysteine + AMP + diphosphate + H(+). It carries out the reaction (indol-3-yl)butanoate + L-glutamine + ATP = (indol-3-yl)butanoyl-L-glutamine + AMP + diphosphate + H(+). The enzyme catalyses 4-(2,4-dichlorophenoxy)butanoate + L-glutamine + ATP = 4-(2,4-dichlorophenoxy)butanoyl-L-glutamine + AMP + diphosphate + H(+). Indole-3-acetic acid-amido (IAA) synthetase that catalyzes the conjugation of amino acids to auxin specifically using the auxin precursor indole-3-butyric acid (IBA) and glutamine and, possibly, cysteine as substrates. Displays high catalytic activity with the auxinic phenoxyalkanoic acid herbicides 4-(2,4-dichlorophenoxy)butyric acid (2,4-DB) and to some extent 2,4-dichlorophenoxylacetic acid (2,4-D) as substrates, thus conferring resistance to herbicides. The sequence is that of Indole-3-acetic acid-amido synthetase GH3.15 from Arabidopsis thaliana (Mouse-ear cress).